A 347-amino-acid polypeptide reads, in one-letter code: UDP-N-acetylenolpyruvoylglucosamine reductase (347 aa).

Residues 15–187 (FGIEQTCSYL…TAIGLKLPKR (173 aa)) form the FAD-binding PCMH-type domain. Arg-163 is an active-site residue. The active-site Proton donor is the Ser-233. Residue Glu-328 is part of the active site.

It belongs to the MurB family. The cofactor is FAD.

Its subcellular location is the cytoplasm. It catalyses the reaction UDP-N-acetyl-alpha-D-muramate + NADP(+) = UDP-N-acetyl-3-O-(1-carboxyvinyl)-alpha-D-glucosamine + NADPH + H(+). The protein operates within cell wall biogenesis; peptidoglycan biosynthesis. Cell wall formation. In Vibrio parahaemolyticus serotype O3:K6 (strain RIMD 2210633), this protein is UDP-N-acetylenolpyruvoylglucosamine reductase.